We begin with the raw amino-acid sequence, 5162 residues long: Linear gramicidin synthase subunit B (5162 aa).

Carrier domains follow at residues 963–1038, 2027–2101, 3541–3616, and 4601–4675; these read APRN…QALR, EPQS…VVLE, APRN…GAIG, and AATS…GQST. An O-(pantetheine 4'-phosphoryl)serine mark is found at Ser-998, Ser-2062, Ser-3576, and Ser-4636.

The protein belongs to the ATP-dependent AMP-binding enzyme family. Large multienzyme complex composed of 4 subunits; LgrA, LgrB, LgrC and LgrD. Requires pantetheine 4'-phosphate as cofactor.

Functionally, activates the 3rd to 6th amino acids (Ala, D-Leu, Ala and D-Val) in linear gramicidin and catalyzes the formation of the peptide bond between them. This enzyme is also responsible for the epimerization of the 4th (D-Leu) and the 6th (D-Val) amino acids. In Brevibacillus parabrevis, this protein is Linear gramicidin synthase subunit B (lgrB).